A 103-amino-acid chain; its full sequence is Pyrimidine/purine nucleoside phosphorylase (103 aa).

Belongs to the nucleoside phosphorylase PpnP family.

It carries out the reaction a purine D-ribonucleoside + phosphate = a purine nucleobase + alpha-D-ribose 1-phosphate. The enzyme catalyses adenosine + phosphate = alpha-D-ribose 1-phosphate + adenine. The catalysed reaction is cytidine + phosphate = cytosine + alpha-D-ribose 1-phosphate. It catalyses the reaction guanosine + phosphate = alpha-D-ribose 1-phosphate + guanine. It carries out the reaction inosine + phosphate = alpha-D-ribose 1-phosphate + hypoxanthine. The enzyme catalyses thymidine + phosphate = 2-deoxy-alpha-D-ribose 1-phosphate + thymine. The catalysed reaction is uridine + phosphate = alpha-D-ribose 1-phosphate + uracil. It catalyses the reaction xanthosine + phosphate = alpha-D-ribose 1-phosphate + xanthine. Its function is as follows. Catalyzes the phosphorolysis of diverse nucleosides, yielding D-ribose 1-phosphate and the respective free bases. Can use uridine, adenosine, guanosine, cytidine, thymidine, inosine and xanthosine as substrates. Also catalyzes the reverse reactions. The chain is Pyrimidine/purine nucleoside phosphorylase from Sulfurimonas denitrificans (strain ATCC 33889 / DSM 1251) (Thiomicrospira denitrificans (strain ATCC 33889 / DSM 1251)).